The primary structure comprises 447 residues: Na(+)-translocating NADH-quinone reductase subunit A (447 aa).

Belongs to the NqrA family. As to quaternary structure, composed of six subunits; NqrA, NqrB, NqrC, NqrD, NqrE and NqrF.

The catalysed reaction is a ubiquinone + n Na(+)(in) + NADH + H(+) = a ubiquinol + n Na(+)(out) + NAD(+). Its function is as follows. NQR complex catalyzes the reduction of ubiquinone-1 to ubiquinol by two successive reactions, coupled with the transport of Na(+) ions from the cytoplasm to the periplasm. NqrA to NqrE are probably involved in the second step, the conversion of ubisemiquinone to ubiquinol. The polypeptide is Na(+)-translocating NADH-quinone reductase subunit A (Tolumonas auensis (strain DSM 9187 / NBRC 110442 / TA 4)).